Consider the following 77-residue polypeptide: Vacuolar ATPase assembly integral membrane protein VMA21 (77 aa).

The Cytoplasmic segment spans residues 1–8 (MAVDVPTS). The helical transmembrane segment at 9-29 (VIVKLMFFTLAMVSFPVLTFF) threads the bilayer. Topologically, residues 30 to 41 (VSQQYTSNTLVN) are lumenal. The helical transmembrane segment at 42 to 62 (GGLAALAANVVLFAYVIMAFS) threads the bilayer. Residues 63 to 77 (EDVPQSDGKESKKQQ) lie on the Cytoplasmic side of the membrane. A Prevents secretion from ER motif is present at residues 74–77 (KKQQ).

The protein belongs to the VMA21 family.

It localises to the endoplasmic reticulum membrane. Its subcellular location is the endoplasmic reticulum-Golgi intermediate compartment membrane. The protein resides in the cytoplasmic vesicle. It is found in the COPII-coated vesicle membrane. Its function is as follows. Required for the assembly of the V0 complex of the vacuolar ATPase (V-ATPase) in the endoplasmic reticulum. In Eremothecium gossypii (strain ATCC 10895 / CBS 109.51 / FGSC 9923 / NRRL Y-1056) (Yeast), this protein is Vacuolar ATPase assembly integral membrane protein VMA21.